The chain runs to 495 residues: Glycerol kinase (495 aa).

Thr13 serves as a coordination point for ADP. ATP-binding residues include Thr13, Thr14, and Ser15. Position 13 (Thr13) interacts with sn-glycerol 3-phosphate. ADP is bound at residue Arg17. Sn-glycerol 3-phosphate is bound by residues Arg83, Glu84, Tyr135, and Asp244. Residues Arg83, Glu84, Tyr135, Asp244, and Gln245 each coordinate glycerol. The ADP site is built by Thr266 and Gly309. Positions 266, 309, 313, and 410 each coordinate ATP. ADP contacts are provided by Gly410 and Asn414.

It belongs to the FGGY kinase family.

The enzyme catalyses glycerol + ATP = sn-glycerol 3-phosphate + ADP + H(+). It functions in the pathway polyol metabolism; glycerol degradation via glycerol kinase pathway; sn-glycerol 3-phosphate from glycerol: step 1/1. Inhibited by fructose 1,6-bisphosphate (FBP). In terms of biological role, key enzyme in the regulation of glycerol uptake and metabolism. Catalyzes the phosphorylation of glycerol to yield sn-glycerol 3-phosphate. The protein is Glycerol kinase of Shewanella woodyi (strain ATCC 51908 / MS32).